The following is a 112-amino-acid chain: Colipase (112 aa).

The N-terminal stretch at 1–17 is a signal peptide; sequence MEKVLALLLVTLTVAYA. The propeptide at 18 to 22 is enterostatin, activation peptide; it reads VPDPR. 5 cysteine pairs are disulfide-bonded: C34/C45, C40/C56, C44/C78, C66/C86, and C80/C104.

This sequence belongs to the colipase family. As to quaternary structure, forms a 1:1 stoichiometric complex with pancreatic lipase. Expressed by the pancreas.

The protein resides in the secreted. Its function is as follows. Colipase is a cofactor of pancreatic lipase. It allows the lipase to anchor itself to the lipid-water interface. Without colipase the enzyme is washed off by bile salts, which have an inhibitory effect on the lipase. Enterostatin has a biological activity as a satiety signal. In Sus scrofa (Pig), this protein is Colipase (CLPS).